Here is a 444-residue protein sequence, read N- to C-terminus: Porin AaxA (444 aa).

The first 19 residues, 1 to 19, serve as a signal peptide directing secretion; it reads MAFSRFYLLTALYTGGILA. Residues 42–68 form a disordered region; the sequence is KNSTQDSDSSPSESSPHPRQEPRRHVL. Positions 46–56 are enriched in low complexity; that stretch reads QDSDSSPSESS.

It belongs to the OprB family.

Its subcellular location is the cell outer membrane. In terms of biological role, facilitates L-arginine uptake, as part of the AaxABC system. The arginine uptake by the bacterium in the macrophage may be a virulence factor against the host innate immune response. This chain is Porin AaxA (aaxA), found in Chlamydia felis (strain Fe/C-56) (Chlamydophila felis).